A 307-amino-acid polypeptide reads, in one-letter code: Acetyl-coenzyme A carboxylase carboxyl transferase subunit beta (307 aa).

One can recognise a CoA carboxyltransferase N-terminal domain in the interval 28–297 (LWVKCPDTGQ…TPQPGTAPEP (270 aa)). Positions 286–307 (RRTPQPGTAPEPTTPEPLPNAA) are disordered. Positions 292–307 (GTAPEPTTPEPLPNAA) are enriched in pro residues.

Belongs to the AccD/PCCB family. As to quaternary structure, acetyl-CoA carboxylase is a heterohexamer composed of biotin carboxyl carrier protein (AccB), biotin carboxylase (AccC) and two subunits each of ACCase subunit alpha (AccA) and ACCase subunit beta (AccD).

It is found in the cytoplasm. It carries out the reaction N(6)-carboxybiotinyl-L-lysyl-[protein] + acetyl-CoA = N(6)-biotinyl-L-lysyl-[protein] + malonyl-CoA. It participates in lipid metabolism; malonyl-CoA biosynthesis; malonyl-CoA from acetyl-CoA: step 1/1. Component of the acetyl coenzyme A carboxylase (ACC) complex. Biotin carboxylase (BC) catalyzes the carboxylation of biotin on its carrier protein (BCCP) and then the CO(2) group is transferred by the transcarboxylase to acetyl-CoA to form malonyl-CoA. This chain is Acetyl-coenzyme A carboxylase carboxyl transferase subunit beta, found in Methylorubrum extorquens (strain CM4 / NCIMB 13688) (Methylobacterium extorquens).